Consider the following 680-residue polypeptide: Epithelial splicing regulatory protein 1 (680 aa).

RRM domains are found at residues 224–301 (TVVR…KATG), 325–405 (VIVR…RSTA), and 444–524 (DCIR…QCSA). Ser542 carries the phosphoserine modification. Arg581 bears the Omega-N-methylarginine mark.

The protein belongs to the ESRP family. Epithelial cell-specific. Epithelial-specific expression in diverse tissues and organs with particularly notable levels of expression in skin and gastrointestinal epithelia.

It localises to the nucleus. In terms of biological role, mRNA splicing factor that regulates the formation of epithelial cell-specific isoforms. Specifically regulates the expression of FGFR2-IIIb, an epithelial cell-specific isoform of FGFR2. Also regulates the splicing of CD44, CTNND1, ENAH, 3 transcripts that undergo changes in splicing during the epithelial-to-mesenchymal transition (EMT). Acts by directly binding specific sequences in mRNAs. Binds the GU-rich sequence motifs in the ISE/ISS-3, a cis-element regulatory region present in the mRNA of FGFR2. Regulates splicing and expression of genes involved in inner ear development, auditory hair cell differentiation, and cell fate specification in the cochlear epithelium. The chain is Epithelial splicing regulatory protein 1 (Esrp1) from Mus musculus (Mouse).